A 628-amino-acid chain; its full sequence is 2-oxoacid:ferredoxin oxidoreductase 2, subunit alpha (628 aa).

Positions 254–258 match the YPITP motif motif; sequence YPITP. Substrate-binding residues include Thr-257 and Arg-344.

Heterodimer composed of an alpha and a beta subunit.

It carries out the reaction a 2-oxocarboxylate + 2 oxidized [2Fe-2S]-[ferredoxin] + CoA = an acyl-CoA + 2 reduced [2Fe-2S]-[ferredoxin] + CO2 + H(+). Its function is as follows. Catalyzes the coenzyme A-dependent oxidative decarboxylation of different 2-oxoacids such as 2-oxoglutarate, pyruvate and 2-oxobutyrate to form their CoA derivatives. The protein is 2-oxoacid:ferredoxin oxidoreductase 2, subunit alpha of Sulfurisphaera tokodaii (strain DSM 16993 / JCM 10545 / NBRC 100140 / 7) (Sulfolobus tokodaii).